The chain runs to 152 residues: Ribosome maturation factor RimP (152 aa).

The protein belongs to the RimP family.

The protein resides in the cytoplasm. Required for maturation of 30S ribosomal subunits. The polypeptide is Ribosome maturation factor RimP (Ectopseudomonas mendocina (strain ymp) (Pseudomonas mendocina)).